Here is a 201-residue protein sequence, read N- to C-terminus: Ras-related protein Rab-1B (201 aa).

Met-1 bears the N-acetylmethionine mark. Residues Ser-17, Gly-18, Val-19, Gly-20, Lys-21, Ser-22, Cys-23, Tyr-33, Thr-34, Glu-35, Ser-36, Ser-39, and Thr-40 each contribute to the GTP site. Ser-22 serves as a coordination point for Mg(2+). The Switch 1 signature appears at 30–45 (DDTYTESYISTIGVDF). 2 residues coordinate Mg(2+): Thr-40 and Asp-63. The interval 64 to 83 (TAGQERFRTITSSYYRGAHG) is switch 2 region; Required for interaction with REP1/CHM. The short motif at 65 to 80 (AGQERFRTITSSYYRG) is the Switch 2 element. Residues Gly-66, Asn-121, Lys-122, Asp-124, Ser-151, Ala-152, and Lys-153 each coordinate GTP. A disordered region spans residues 173–201 (MGPGAASGGERPNLKIDSTPVKQAGGGCC). 2 S-geranylgeranyl cysteine lipidation sites follow: Cys-200 and Cys-201. Cys-201 is modified (cysteine methyl ester).

Belongs to the small GTPase superfamily. Rab family. As to quaternary structure, interacts with MICAL1 and MICAL2. Interacts (in GTP-bound form) with MICALCL, MICAL1 and MILCAL3. Interacts with GDI1; the interaction requires the GDP-bound state. Interacts with CHM/REP1; the interaction requires the GDP-bound form and is necessary for prenylation by GGTase II. Interacts with RabGAP TBC1D20. Interacts (in GDP-bound form) with lipid phosphatase MTMR6 (via GRAM domain); the interaction regulates MTMR6 recruitment to the endoplasmic reticulum-Golgi intermediate compartment. Interacts (in GDP-bound form) with lipid phosphatase MTMR7. It depends on Mg(2+) as a cofactor. Prenylated; by GGTase II, only after interaction of the substrate with Rab escort protein 1 (REP1).

It is found in the cytoplasm. The protein resides in the membrane. The protein localises to the preautophagosomal structure membrane. Its subcellular location is the perinuclear region. The catalysed reaction is GTP + H2O = GDP + phosphate + H(+). Its activity is regulated as follows. Regulated by guanine nucleotide exchange factors (GEFs) which promote the exchange of bound GDP for free GTP. Regulated by GTPase activating proteins (GAPs) including TBC1D20 which increases the GTP hydrolysis activity. Inhibited by GDP dissociation inhibitors (GDIs). In terms of biological role, the small GTPases Rab are key regulators of intracellular membrane trafficking, from the formation of transport vesicles to their fusion with membranes. Rabs cycle between an inactive GDP-bound form and an active GTP-bound form that is able to recruit to membranes different set of downstream effectors directly responsible for vesicle formation, movement, tethering and fusion. Plays a role in the initial events of the autophagic vacuole development which take place at specialized regions of the endoplasmic reticulum. Regulates vesicular transport between the endoplasmic reticulum and successive Golgi compartments. Required to modulate the compacted morphology of the Golgi. Promotes the recruitment of lipid phosphatase MTMR6 to the endoplasmic reticulum-Golgi intermediate compartment. In Bos taurus (Bovine), this protein is Ras-related protein Rab-1B (RAB1B).